Here is a 293-residue protein sequence, read N- to C-terminus: 4-hydroxy-tetrahydrodipicolinate synthase (293 aa).

T45 serves as a coordination point for pyruvate. The active-site Proton donor/acceptor is Y133. K161 serves as the catalytic Schiff-base intermediate with substrate. I203 is a pyruvate binding site.

The protein belongs to the DapA family. Homotetramer; dimer of dimers.

It is found in the cytoplasm. The catalysed reaction is L-aspartate 4-semialdehyde + pyruvate = (2S,4S)-4-hydroxy-2,3,4,5-tetrahydrodipicolinate + H2O + H(+). Its pathway is amino-acid biosynthesis; L-lysine biosynthesis via DAP pathway; (S)-tetrahydrodipicolinate from L-aspartate: step 3/4. Catalyzes the condensation of (S)-aspartate-beta-semialdehyde [(S)-ASA] and pyruvate to 4-hydroxy-tetrahydrodipicolinate (HTPA). This Exiguobacterium sibiricum (strain DSM 17290 / CCUG 55495 / CIP 109462 / JCM 13490 / 255-15) protein is 4-hydroxy-tetrahydrodipicolinate synthase.